The chain runs to 3620 residues: Cubilin (3620 aa).

The N-terminal stretch at 1–20 is a signal peptide; sequence MSSPFLWSLIILLTFAESNG. The propeptide at 21 to 32 is removed in mature form; the sequence is EAGGFELQRQKR. The interval 39–46 is interaction with AMN; it reads PRMATERG. N102 carries N-linked (GlcNAc...) asparagine glycosylation. In terms of domain architecture, EGF-like 1 spans 129 to 165; that stretch reads DKKVCSSNPCQNGGTCLNLHDSFFCICPSQWKGPLCS. 6 disulfide bridges follow: C133-C144, C138-C153, C155-C164, C171-C187, C181-C196, and C198-C207. An EGF-like 2; calcium-binding domain is found at 167–208; the sequence is DVNECQIYSGTPLGCQNGATCENTAGSYSCLCSPETHGPQCA. N-linked (GlcNAc...) asparagine glycosylation occurs at N253. The region spanning 260–301 is the EGF-like 3; calcium-binding domain; sequence DIDECNLQHAPCSPLVQCFNTQGSFYCGACPTGWQGNGYSCQ. 19 disulfides stabilise this stretch: C264–C277, C271–C286, C289–C300, C306–C321, C313–C330, C333–C344, C350–C363, C357–C373, C396–C406, C401–C415, C417–C426, C433–C444, C438–C453, C455–C464, C471–C497, C524–C546, C587–C613, C640–C662, and C705–C730. Residues 302–345 form the EGF-like 4; calcium-binding domain; it reads DIDECKINNGGCSVVPPVMCVNTLGSYHCQACPPGYQGDGRVCT. EGF-like domains follow at residues 346-382 and 392-427; these read VIDI…YTGN and LSDT…INCT. N-linked (GlcNAc...) asparagine glycosylation is present at N425. In terms of domain architecture, EGF-like 7; calcium-binding spans 429-465; sequence NINECLSNPCFNGGTCVDGVNAFSCECTRFWTGFLCQ. CUB domains are found at residues 471 to 583, 587 to 699, 705 to 812, 813 to 924, 928 to 1038, 1044 to 1158, 1162 to 1274, 1275 to 1386, 1388 to 1503, 1507 to 1616, 1617 to 1731, 1735 to 1847, and 1849 to 1960; these read CGGS…WETQ, CGGI…YLTS, CGGN…YQVA, CGGE…FSAA, CGEI…YEAT, CMED…WDGS, CGGN…YQQT, CRNV…WFIH, CGGE…WQAV, CGGI…FNQV, CGGH…YAAS, CGGT…FTKI, and GNDN…WFAV. N-linked (GlcNAc...) asparagine glycans are attached at residues N708 and N745. A disulfide bridge connects residues C757 and C775. N777 carries N-linked (GlcNAc...) asparagine glycosylation. C813 and C838 are joined by a disulfide. N853 is a glycosylation site (N-linked (GlcNAc...) asparagine). Cystine bridges form between C865-C887 and C928-C954. N-linked (GlcNAc...) asparagine glycosylation occurs at N953. E976 contributes to the Ca(2+) binding site. N980 carries an N-linked (GlcNAc...) asparagine glycan. A disulfide bridge connects residues C981 and C1001. 4 residues coordinate Ca(2+): D984, D1023, D1025, and L1026. C1044 and C1070 are oxidised to a cystine. 3 residues coordinate Ca(2+): E1092, D1102, and D1143. Cysteines 1099 and 1121 form a disulfide. C1162 and C1188 form a disulfide bridge. N-linked (GlcNAc...) asparagine glycosylation is present at N1165. Position 1210 (E1210) interacts with Ca(2+). N-linked (GlcNAc...) asparagine glycosylation is present at N1214. An intrachain disulfide couples C1215 to C1237. 3 residues coordinate Ca(2+): D1218, D1259, and Q1262. C1275 and C1303 are disulfide-bonded. N-linked (GlcNAc...) asparagine glycans are attached at residues N1304 and N1316. A Ca(2+)-binding site is contributed by E1325. An N-linked (GlcNAc...) asparagine glycan is attached at N1329. The cysteines at positions 1330 and 1348 are disulfide-linked. Residues D1333, D1370, and V1372 each coordinate Ca(2+). Disulfide bonds link C1388/C1414 and C1441/C1463. Residue N1497 is glycosylated (N-linked (GlcNAc...) asparagine). C1507 and C1533 are joined by a disulfide. Residue N1548 is glycosylated (N-linked (GlcNAc...) asparagine). Intrachain disulfides connect C1560–C1578, C1617–C1644, C1672–C1694, C1735–C1761, and C1788–C1809. A glycan (N-linked (GlcNAc...) asparagine) is linked at N1643. 3 N-linked (GlcNAc...) asparagine glycosylation sites follow: N1799, N1816, and N1882. An intrachain disulfide couples C1902 to C1924. An N-linked (GlcNAc...) asparagine glycan is attached at N1961. 2 disulfide bridges follow: C1975–C2003 and C2029–C2051. 14 consecutive CUB domains span residues 1975 to 2088, 2089 to 2210, 2214 to 2331, 2333 to 2445, 2449 to 2562, 2567 to 2684, 2686 to 2798, 2802 to 2916, 2917 to 3032, 3034 to 3147, 3154 to 3271, 3275 to 3392, 3392 to 3504, and 3508 to 3620; these read CGGF…FHKS, CGGY…YEAK, CGGN…YAIA, CGGR…FESS, CGGE…YTSS, CGGS…YSFT, CGGI…WNTQ, CGGI…FVSR, CGGN…YKIT, CGGV…FQQT, CGGY…YTTV, CGGT…IAGC, CNRE…WTSS, and CGGT…TWDS. N-linked (GlcNAc...) asparagine glycosylation is found at N2082 and N2114. Intrachain disulfides connect C2089-C2115, C2214-C2244, and C2272-C2294. N-linked (GlcNAc...) asparagine glycosylation occurs at N2317. The cysteines at positions 2333 and 2360 are disulfide-linked. N2383 and N2397 each carry an N-linked (GlcNAc...) asparagine glycan. Disulfide bonds link C2387-C2408, C2449-C2475, and C2502-C2524. N-linked (GlcNAc...) asparagine glycosylation is found at N2528, N2578, N2589, and N2607. The cysteines at positions 2567 and 2596 are disulfide-linked. Intrachain disulfides connect C2625–C2646, C2686–C2712, C2739–C2761, C2802–C2828, C2857–C2880, C2917–C2943, and C2974–C2996. The N-linked (GlcNAc...) asparagine glycan is linked to N2810. 3 N-linked (GlcNAc...) asparagine glycosylation sites follow: N2920, N2942, and N2986. T3005 carries the phosphothreonine modification. Disulfide bonds link C3034-C3061 and C3088-C3110. N-linked (GlcNAc...) asparagine glycosylation is found at N3039, N3100, and N3122. 2 cysteine pairs are disulfide-bonded: C3154-C3182 and C3212-C3234. N3265, N3280, and N3292 each carry an N-linked (GlcNAc...) asparagine glycan. Cystine bridges form between C3275/C3303 and C3329/C3351. The N-linked (GlcNAc...) asparagine glycan is linked to N3354. Cysteines 3392 and 3418 form a disulfide. N-linked (GlcNAc...) asparagine glycans are attached at residues N3427, N3454, and N3530. 3 disulfide bridges follow: C3445–C3467, C3508–C3534, and C3561–C3583.

Interacts with AMN. Component of the cubam complex composed of one CUBN trimer and one AMN chain. The cubam complex can dimerize. Interacts with LRP2 in a dual-receptor complex in a calcium-dependent manner. Found in a complex with PID1/PCLI1, LRP1 and CUBNI. Interacts with LRP1 and PID1/PCLI1. The precursor is cleaved by a trans-Golgi proteinase furin, removing a propeptide. In terms of processing, N-glycosylated. Detected in kidney cortex (at protein level). Detected in kidney, duodenum and jejunum.

It is found in the apical cell membrane. Its subcellular location is the cell membrane. It localises to the membrane. The protein localises to the coated pit. The protein resides in the endosome. It is found in the lysosome membrane. Functionally, endocytic receptor which plays a role in lipoprotein, vitamin and iron metabolism by facilitating their uptake. Acts together with LRP2 to mediate endocytosis of high-density lipoproteins, GC, hemoglobin, ALB, TF and SCGB1A1. Acts together with AMN to mediate endocytosis of the CBLIF-cobalamin complex. Binds to ALB, MB, Kappa and lambda-light chains, TF, hemoglobin, GC, SCGB1A1, APOA1, high density lipoprotein, and the CBLIF-cobalamin complex. Ligand binding requires calcium. Serves as important transporter in several absorptive epithelia, including intestine, renal proximal tubules and embryonic yolk sac. May play an important role in the development of the peri-implantation embryo through internalization of APOA1 and cholesterol. Binds to LGALS3 at the maternal-fetal interface. This chain is Cubilin (CUBN), found in Canis lupus familiaris (Dog).